The chain runs to 453 residues: Magnesium transporter MgtE (453 aa).

Residues 1–286 (MNEGQEMEEQ…ENPLKAASKR (286 aa)) lie on the Cytoplasmic side of the membrane. Mg(2+) contacts are provided by glutamate 71, aspartate 98, aspartate 102, glutamate 136, alanine 140, tyrosine 176, arginine 227, aspartate 230, alanine 233, aspartate 251, and glutamate 259. CBS domains are found at residues 142–205 (MTTE…IADI) and 206–262 (LNER…EAAS). A helical membrane pass occupies residues 287–307 (LPWLITLLFLGMSTASLISNY). A topological domain (extracellular) is located at residue glutamate 308. A helical membrane pass occupies residues 309 to 329 (SLVSEASILAVFISLITGTAG). At 330–360 (NAGTQSLAVAVRRLAMKDEKDSNFGRLILSE) the chain is on the cytoplasmic side. A helical membrane pass occupies residues 361–381 (VLTGLVTGAVTGLTIMIVVGV). At 382–389 (WQHNLPLG) the chain is on the extracellular side. A helical transmembrane segment spans residues 390-410 (FVIGMAMLCAITVANLAGSLI). Over 411–427 (PMLMDKLGFDPAVASGP) the chain is Cytoplasmic. Residues 428–448 (FITTLSDLTSVLIYFNIASMF) form a helical membrane-spanning segment. Aspartate 434 provides a ligand contact to Mg(2+). At 449-453 (MRYFV) the chain is on the extracellular side.

It belongs to the SLC41A transporter family. As to quaternary structure, homodimer.

It localises to the cell membrane. It carries out the reaction Mg(2+)(in) = Mg(2+)(out). Acts as a magnesium transporter. The protein is Magnesium transporter MgtE of Enterococcus faecalis (strain ATCC 700802 / V583).